We begin with the raw amino-acid sequence, 464 residues long: Kynureninase 2 (464 aa).

Pyridoxal 5'-phosphate is bound by residues L135, T136, 163-166 (FPSD), D248, H251, and Y273. N6-(pyridoxal phosphate)lysine is present on K274. W313 and N341 together coordinate pyridoxal 5'-phosphate.

Belongs to the kynureninase family. As to quaternary structure, homodimer. It depends on pyridoxal 5'-phosphate as a cofactor.

The protein resides in the cytoplasm. The enzyme catalyses L-kynurenine + H2O = anthranilate + L-alanine + H(+). The catalysed reaction is 3-hydroxy-L-kynurenine + H2O = 3-hydroxyanthranilate + L-alanine + H(+). The protein operates within amino-acid degradation; L-kynurenine degradation; L-alanine and anthranilate from L-kynurenine: step 1/1. It functions in the pathway cofactor biosynthesis; NAD(+) biosynthesis; quinolinate from L-kynurenine: step 2/3. In terms of biological role, catalyzes the cleavage of L-kynurenine (L-Kyn) and L-3-hydroxykynurenine (L-3OHKyn) into anthranilic acid (AA) and 3-hydroxyanthranilic acid (3-OHAA), respectively. The protein is Kynureninase 2 (bna5-2) of Aspergillus fumigatus (strain CBS 144.89 / FGSC A1163 / CEA10) (Neosartorya fumigata).